Reading from the N-terminus, the 1001-residue chain is Serine/threonine-protein kinase TAO1 (1001 aa).

S9 carries the post-translational modification Phosphoserine. Residues 28 to 281 (FTDLREIGHG…SEELLKHMFV (254 aa)) form the Protein kinase domain. ATP contacts are provided by residues 34-42 (IGHGSFGAV) and K57. The active-site Proton acceptor is D151. 2 disordered regions span residues 324–380 (PAVE…DKSE) and 404–433 (ENYQ…SHYR). A compositionally biased stretch (low complexity) spans 350–370 (SNQSIPSMSISASSQSSSVNS). Phosphoserine occurs at positions 421 and 445. Residues 458–651 (SELREQMSGY…QTQKDLEHAM (194 aa)) are a coiled coil. The tract at residues 567–587 (KEELNENQSTPKKEKQEWLSK) is disordered. The span at 577–587 (PKKEKQEWLSK) shows a compositional bias: basic and acidic residues. Residue T669 is modified to Phosphothreonine. Positions 754-877 (KAVLKRLKEE…LERQAREIEA (124 aa)) form a coiled coil. The interval 905–1001 (PGASSWSHNP…ISNGSHMSYT (97 aa)) is disordered. Over residues 921–930 (HWGHPMGGTP) the composition is skewed to low complexity. Phosphoserine is present on S965. Positions 975–1001 (GGRTEQGMSRSTSVTSQISNGSHMSYT) are enriched in polar residues.

This sequence belongs to the protein kinase superfamily. STE Ser/Thr protein kinase family. STE20 subfamily. As to quaternary structure, self-associates. Interacts with MAP2K3. Interacts with SPRED1. Interacts with TESK1; the interaction inhibits TAOK1 kinase activity. Interacts with MAP3K7. Proteolytically processed by caspase-3 (CASP3). In terms of processing, autophosphorylated. Phosphorylated by ATM in response to DNA damage. Phosphorylated by LRRK2.

The protein resides in the cytoplasm. It catalyses the reaction L-seryl-[protein] + ATP = O-phospho-L-seryl-[protein] + ADP + H(+). The catalysed reaction is L-threonyl-[protein] + ATP = O-phospho-L-threonyl-[protein] + ADP + H(+). Serine/threonine-protein kinase activity is inhibited by SPRED1. Its function is as follows. Serine/threonine-protein kinase involved in various processes such as p38/MAPK14 stress-activated MAPK cascade, DNA damage response and regulation of cytoskeleton stability. Phosphorylates MAP2K3, MAP2K6 and MARK2. Acts as an activator of the p38/MAPK14 stress-activated MAPK cascade by mediating phosphorylation and subsequent activation of the upstream MAP2K3 and MAP2K6 kinases. Involved in G-protein coupled receptor signaling to p38/MAPK14. In response to DNA damage, involved in the G2/M transition DNA damage checkpoint by activating the p38/MAPK14 stress-activated MAPK cascade, probably by mediating phosphorylation of MAP2K3 and MAP2K6. Acts as a regulator of cytoskeleton stability by phosphorylating 'Thr-208' of MARK2, leading to activate MARK2 kinase activity and subsequent phosphorylation and detachment of MAPT/TAU from microtubules. Also acts as a regulator of apoptosis: regulates apoptotic morphological changes, including cell contraction, membrane blebbing and apoptotic bodies formation via activation of the MAPK8/JNK cascade. During fetal development, it plays an essential role in the regulation of neuronal differentiation and migration to the cortical plate. This Mus musculus (Mouse) protein is Serine/threonine-protein kinase TAO1 (Taok1).